The sequence spans 266 residues: Gasdermin bGSDM (266 aa).

C3 carries S-palmitoyl cysteine lipidation. The next 4 membrane-spanning stretches (beta stranded) occupy residues 69 to 85, 97 to 115, 163 to 180, and 189 to 205; these read ISGQ…GLSI, KLGL…FEFQ, KFTI…ELTI, and GNVK…KICY.

The protein belongs to the bacterial gasdermin family. In terms of assembly, monomer. As to quaternary structure, forms large, homooligomeric ring-shaped pores when inserted in membranes. Palmitoylation helps stabilize the inactive state; may self palmitoylate. Palmitoylation plays a significant role in pore formation.

The protein localises to the cytoplasm. It localises to the cell inner membrane. Its activity is regulated as follows. The full-length protein before cleavage is inactive: intramolecular interactions between the N-terminal domain and the C-terminal region as well as the lipid modification, mediate autoinhibition. The pyroptosis-like-inducing activity is carried by the released N-terminal domain (Gasdermin bGSDM, N-terminus). Its function is as follows. Precursor of a pore-forming protein involved in defense against bacteriophages. Expression of bGSDM and the neighboring protease gene (Ga0182885_104520) is toxic in E.coli. Cleavage of this precursor by its dedicated protease releases the active moiety (gasdermin bGSDM, N-terminus) which inserts into membranes, forming pores and triggering cell death. Pore-forming protein that causes membrane permeabilization via a pyroptosis-like activity. Makes ring-like pores when released. The protein is Gasdermin bGSDM of Desulfuromonadales bacterium.